Consider the following 558-residue polypeptide: Acylase ACY 1 proenzyme (558 aa).

Catalysis depends on Thr368, which acts as the Nucleophile.

Belongs to the gamma-glutamyltransferase family. As to quaternary structure, dimer of two non-identical chains processed from the same precursor.

It carries out the reaction (7R)-7-(4-carboxybutanamido)cephalosporanate + H2O = (7R)-7-aminocephalosporanate + glutarate. The catalysed reaction is an N-terminal (5-L-glutamyl)-[peptide] + an alpha-amino acid = 5-L-glutamyl amino acid + an N-terminal L-alpha-aminoacyl-[peptide]. The enzyme catalyses glutathione + H2O = L-cysteinylglycine + L-glutamate. It catalyses the reaction an S-substituted glutathione + H2O = an S-substituted L-cysteinylglycine + L-glutamate. Its function is as follows. Besides the cephalosporin acylase I activity which converts GL-7ACA into 7-ACA; this enzyme displays some gamma glutamyltranspeptidase activity. The sequence is that of Acylase ACY 1 proenzyme (acyI) from Pseudomonas sp. (strain V22).